The chain runs to 794 residues: Zinc finger protein 148 (794 aa).

Residue lysine 6 forms a Glycyl lysine isopeptide (Lys-Gly) (interchain with G-Cter in SUMO2) linkage. Serine 51 is modified (phosphoserine). Glycyl lysine isopeptide (Lys-Gly) (interchain with G-Cter in SUMO2) cross-links involve residues lysine 88, lysine 115, and lysine 132. The C2H2-type 1 zinc-finger motif lies at 171-193 (HVCEHCNAAFRTNYHLQRHVFIH). Threonine 194 is subject to Phosphothreonine. 2 consecutive C2H2-type zinc fingers follow at residues 199–221 (FQCS…EKIH) and 227–249 (FRCD…KRTH). Serine 250 is subject to Phosphoserine. The segment at 255-278 (YQCEYCLQYFSRTDRVLKHKRMCH) adopts a C2H2-type 4 zinc-finger fold. Residue lysine 291 forms a Glycyl lysine isopeptide (Lys-Gly) (interchain with G-Cter in SUMO2) linkage. The tract at residues 298–336 (EEDSGFSTSPKDNSLPKKKRQKTEKKSSGMDKESVLDKS) is disordered. Serine 301 and serine 306 each carry phosphoserine. Lysine 308 is covalently cross-linked (Glycyl lysine isopeptide (Lys-Gly) (interchain with G-Cter in SUMO2)). Residues 321–336 (EKKSSGMDKESVLDKS) show a composition bias toward basic and acidic residues. Residue lysine 356 forms a Glycyl lysine isopeptide (Lys-Gly) (interchain with G-Cter in SUMO1); alternate linkage. Lysine 356 participates in a covalent cross-link: Glycyl lysine isopeptide (Lys-Gly) (interchain with G-Cter in SUMO2); alternate. Lysine 402 participates in a covalent cross-link: Glycyl lysine isopeptide (Lys-Gly) (interchain with G-Cter in SUMO2). Serine 412 bears the Phosphoserine mark. Glycyl lysine isopeptide (Lys-Gly) (interchain with G-Cter in SUMO2) cross-links involve residues lysine 421 and lysine 424. The span at 574 to 588 (NSSDVPEVTQSENVG) shows a compositional bias: polar residues. Residues 574–599 (NSSDVPEVTQSENVGSSSQASSSDKA) form a disordered region. Position 607 is an N6-acetyllysine (lysine 607). Phosphoserine is present on residues serine 665 and serine 784.

This sequence belongs to the krueppel C2H2-type zinc-finger protein family. In terms of assembly, interacts with HNRNPDL. Interacts with the 5FMC complex; the interaction requires association with CHTOP. Interacts with CAVIN1. Post-translationally, sumoylated with SUMO2. Desumoylated by SENP3, resulting in the stimulation of transcription of its target genes. In terms of tissue distribution, strong expression detected in brain, lung, liver and kidney, with lower levels detected in spleen, skeletal muscle, testis and heart.

The protein localises to the nucleus. Involved in transcriptional regulation. Represses the transcription of a number of genes including gastrin, stromelysin and enolase. Binds to the G-rich box in the enhancer region of these genes. This Mus musculus (Mouse) protein is Zinc finger protein 148 (Znf148).